The chain runs to 107 residues: Large ribosomal subunit protein uL24 (107 aa).

Belongs to the universal ribosomal protein uL24 family. Part of the 50S ribosomal subunit.

One of two assembly initiator proteins, it binds directly to the 5'-end of the 23S rRNA, where it nucleates assembly of the 50S subunit. In terms of biological role, one of the proteins that surrounds the polypeptide exit tunnel on the outside of the subunit. The sequence is that of Large ribosomal subunit protein uL24 from Fervidobacterium nodosum (strain ATCC 35602 / DSM 5306 / Rt17-B1).